A 104-amino-acid chain; its full sequence is Large ribosomal subunit protein uL24 (104 aa).

This sequence belongs to the universal ribosomal protein uL24 family. As to quaternary structure, part of the 50S ribosomal subunit.

One of two assembly initiator proteins, it binds directly to the 5'-end of the 23S rRNA, where it nucleates assembly of the 50S subunit. Its function is as follows. One of the proteins that surrounds the polypeptide exit tunnel on the outside of the subunit. The polypeptide is Large ribosomal subunit protein uL24 (Shigella flexneri).